Reading from the N-terminus, the 91-residue chain is DNA-directed RNA polymerase subunit Rpo5 (91 aa).

Belongs to the archaeal Rpo5/eukaryotic RPB5 RNA polymerase subunit family. As to quaternary structure, part of the RNA polymerase complex.

Its subcellular location is the cytoplasm. It carries out the reaction RNA(n) + a ribonucleoside 5'-triphosphate = RNA(n+1) + diphosphate. Its function is as follows. DNA-dependent RNA polymerase (RNAP) catalyzes the transcription of DNA into RNA using the four ribonucleoside triphosphates as substrates. The chain is DNA-directed RNA polymerase subunit Rpo5 from Staphylothermus marinus (strain ATCC 43588 / DSM 3639 / JCM 9404 / F1).